Consider the following 147-residue polypeptide: MEIRRADKDDLDDFVRVYVESYRGLEDYAYTRKRDVKNYFKWLLSRDKDGVMVAEIDGEAVGFVACDTNWFSIFERKKVGEIHELFVLPEFRGEGIGAKLMEKALEYALERNRKVAELWVGRTNYRARRFYASQDLRRPESGGSGSE.

Residues M1–E147 enclose the N-acetyltransferase domain.

It belongs to the acetyltransferase family.

This is an uncharacterized protein from Archaeoglobus fulgidus (strain ATCC 49558 / DSM 4304 / JCM 9628 / NBRC 100126 / VC-16).